We begin with the raw amino-acid sequence, 160 residues long: Probable cyclic pyranopterin monophosphate synthase (160 aa).

A compositionally biased stretch (basic and acidic residues) spans 1 to 12 (MSDDSELTHVTD). The interval 1–24 (MSDDSELTHVTDDGDAQMVDVGEK) is disordered. Substrate-binding positions include 78–80 (MCH) and 114–115 (ME). The active site involves Asp129.

The protein belongs to the MoaC family. In terms of assembly, homohexamer; trimer of dimers.

It carries out the reaction (8S)-3',8-cyclo-7,8-dihydroguanosine 5'-triphosphate = cyclic pyranopterin phosphate + diphosphate. The protein operates within cofactor biosynthesis; molybdopterin biosynthesis. Functionally, catalyzes the conversion of (8S)-3',8-cyclo-7,8-dihydroguanosine 5'-triphosphate to cyclic pyranopterin monophosphate (cPMP). This chain is Probable cyclic pyranopterin monophosphate synthase, found in Natronomonas pharaonis (strain ATCC 35678 / DSM 2160 / CIP 103997 / JCM 8858 / NBRC 14720 / NCIMB 2260 / Gabara) (Halobacterium pharaonis).